Here is a 286-residue protein sequence, read N- to C-terminus: F-box/SPRY domain-containing protein 1 (286 aa).

Residue A2 is modified to N-acetylalanine. One can recognise an F-box domain in the interval 33-82 (AGAGGRLPSRVLELVFSYLELSELRSCALVCKHWYRCLHGDENSEVWRSL). The region spanning 92-284 (LRTDILCNLP…VTLVYLGKPL (193 aa)) is the B30.2/SPRY domain.

The protein belongs to the FBXO45/Fsn family. As to quaternary structure, forms a complex with MYCBP2 and SKP1. Interacts with HEY1; leading to FBXO45 nuclear translocation. Interacts (via SPRY domain) with CDH2.

Its subcellular location is the secreted. It localises to the postsynaptic cell membrane. It is found in the presynaptic cell membrane. The protein resides in the nucleus. It functions in the pathway protein modification; protein ubiquitination. Component of E3 ubiquitin ligase complex consisting of FBXO45, MYCBP2 and SKP1. Functions in substrate recognition but also plays an important role in assembly of the complex. Required for normal neuromuscular synaptogenesis, axon pathfinding and neuronal migration. Regulates neuron migration during brain development through interaction with N-cadherin/CDH2 after secretion via a non-classical mechanism. Plays a role in the regulation of neurotransmission at mature neurons. May control synaptic activity by controlling UNC13A via ubiquitin dependent pathway. Specifically recognizes TP73, promoting its ubiquitination and degradation. Polyubiquitinates NMNAT2, an adenylyltransferase that acts as an axon maintenance factor, and regulates its stability and degradation by the proteasome. Also acts by ubiquitinating FBXW7 during prolonged mitotic arrest and promotes FBXW7 proteasomal degradation. Induces subsequently an increase in mitotic slippage and prevents mitotic cell death. In response to influenza infection, mediates interferon-lambda receptor IFNLR1 polyubiquitination and degradation through the ubiquitin-proteasome system by docking with its intracellular receptor domain. This chain is F-box/SPRY domain-containing protein 1 (FBXO45), found in Homo sapiens (Human).